A 152-amino-acid polypeptide reads, in one-letter code: Acidic phospholipase A2 S16-19 (152 aa).

The signal sequence occupies residues 1-19 (MYPAHLLVLLAVCVSLLGA). The propeptide occupies 20 to 27 (SNIPLPSL). 6 disulfides stabilise this stretch: Cys-38-Cys-104, Cys-54-Cys-151, Cys-71-Cys-132, Cys-78-Cys-125, Cys-88-Cys-118, and Cys-111-Cys-123. Ca(2+) contacts are provided by Tyr-55, Gly-57, and Gly-59. Residue His-75 is part of the active site. Asp-76 is a binding site for Ca(2+). Asp-126 is a catalytic residue.

It belongs to the phospholipase A2 family. Group I subfamily. D49 sub-subfamily. It depends on Ca(2+) as a cofactor. In terms of processing, this enzyme lacks one of the seven disulfide bonds found in similar PLA2 proteins. Expressed by the venom gland.

The protein localises to the secreted. The enzyme catalyses a 1,2-diacyl-sn-glycero-3-phosphocholine + H2O = a 1-acyl-sn-glycero-3-phosphocholine + a fatty acid + H(+). Functionally, snake venom phospholipase A2 (PLA2) that inhibits collagen-induced platelet aggregation. PLA2 catalyzes the calcium-dependent hydrolysis of the 2-acyl groups in 3-sn-phosphoglycerides. The sequence is that of Acidic phospholipase A2 S16-19 from Austrelaps superbus (Lowland copperhead snake).